A 375-amino-acid polypeptide reads, in one-letter code: Lipid-A-disaccharide synthase (375 aa).

Belongs to the LpxB family.

The catalysed reaction is a lipid X + a UDP-2-N,3-O-bis[(3R)-3-hydroxyacyl]-alpha-D-glucosamine = a lipid A disaccharide + UDP + H(+). It participates in bacterial outer membrane biogenesis; LPS lipid A biosynthesis. Condensation of UDP-2,3-diacylglucosamine and 2,3-diacylglucosamine-1-phosphate to form lipid A disaccharide, a precursor of lipid A, a phosphorylated glycolipid that anchors the lipopolysaccharide to the outer membrane of the cell. The protein is Lipid-A-disaccharide synthase of Pseudomonas putida (strain ATCC 47054 / DSM 6125 / CFBP 8728 / NCIMB 11950 / KT2440).